Here is a 1033-residue protein sequence, read N- to C-terminus: Probable beta-glucosidase E (1033 aa).

The segment at 1-71 (MAPPDSTHGG…RSGSYKLRPV (71 aa)) is disordered. Residues 1-161 (MAPPDSTHGG…PVKYARIWWR (161 aa)) lie on the Cytoplasmic side of the membrane. Composition is skewed to basic and acidic residues over residues 11-20 (SFRDHLKTND) and 59-71 (DLERSGSYKLRPV). The helical; Signal-anchor for type II membrane protein transmembrane segment at 162 to 182 (TLLAVVVTLVVVVWGFLSFAV) threads the bilayer. Residues 183–1033 (SHREEPTVWP…SRDLPLMGEY (851 aa)) are Extracellular-facing. N224, N232, and N418 each carry an N-linked (GlcNAc...) asparagine glycan. Residue D446 is part of the active site. Residues N489, N528, N593, N909, N918, and N976 are each glycosylated (N-linked (GlcNAc...) asparagine).

The protein belongs to the glycosyl hydrolase 3 family.

It localises to the cell membrane. The enzyme catalyses Hydrolysis of terminal, non-reducing beta-D-glucosyl residues with release of beta-D-glucose.. It participates in glycan metabolism; cellulose degradation. In terms of biological role, beta-glucosidases are one of a number of cellulolytic enzymes involved in the degradation of cellulosic biomass. Catalyzes the last step releasing glucose from the inhibitory cellobiose. This is Probable beta-glucosidase E (bglE) from Aspergillus fumigatus (strain CBS 144.89 / FGSC A1163 / CEA10) (Neosartorya fumigata).